A 117-amino-acid polypeptide reads, in one-letter code: Large ribosomal subunit protein bL19 (117 aa).

This sequence belongs to the bacterial ribosomal protein bL19 family.

Functionally, this protein is located at the 30S-50S ribosomal subunit interface and may play a role in the structure and function of the aminoacyl-tRNA binding site. In Shewanella halifaxensis (strain HAW-EB4), this protein is Large ribosomal subunit protein bL19.